A 382-amino-acid polypeptide reads, in one-letter code: Galactokinase (382 aa).

Residue 34-37 (EHTD) participates in substrate binding. 124–130 (GAGLSSS) is an ATP binding site. Residues serine 130 and glutamate 162 each contribute to the Mg(2+) site. The active-site Proton acceptor is the aspartate 174. Residue tyrosine 223 participates in substrate binding.

It belongs to the GHMP kinase family. GalK subfamily.

Its subcellular location is the cytoplasm. The enzyme catalyses alpha-D-galactose + ATP = alpha-D-galactose 1-phosphate + ADP + H(+). It participates in carbohydrate metabolism; galactose metabolism. Catalyzes the transfer of the gamma-phosphate of ATP to D-galactose to form alpha-D-galactose-1-phosphate (Gal-1-P). The sequence is that of Galactokinase from Escherichia coli O157:H7 (strain EC4115 / EHEC).